The sequence spans 320 residues: tRNA (guanine(10)-N2)-dimethyltransferase (320 aa).

One can recognise a THUMP domain in the interval 46-136 (EKFFERLAYT…DDKCYVGLLE (91 aa)).

The protein belongs to the methyltransferase superfamily. Trm-G10 family. In terms of assembly, monomer.

It is found in the cytoplasm. The enzyme catalyses guanosine(10) in tRNA + 2 S-adenosyl-L-methionine = N(2)-dimethylguanosine(10) in tRNA + 2 S-adenosyl-L-homocysteine + 2 H(+). Catalyzes the adenosylmethionine-dependent methylation of the exocyclic amino group (N(2)) of guanosine at position 10 of various tRNAs. Acts via a two-step process that leads to the formation of either N(2)-monomethyl (m(2)G) or N(2)-dimethylguanosine (m(2)(2)G). The polypeptide is tRNA (guanine(10)-N2)-dimethyltransferase (trmG10) (Archaeoglobus fulgidus (strain ATCC 49558 / DSM 4304 / JCM 9628 / NBRC 100126 / VC-16)).